Consider the following 340-residue polypeptide: Phospho-N-acetylmuramoyl-pentapeptide-transferase (340 aa).

The next 9 membrane-spanning stretches (helical) occupy residues 22 to 42, 69 to 89, 95 to 115, 129 to 149, 156 to 176, 186 to 206, 209 to 229, 235 to 257, and 316 to 336; these read VVVPFGLSALGSALLGSLLIP, TMGGISFLPVGLLVAGIWSGW, AVALLTLAYSFVGWLDDWLVI, LLLQVGVALGFCVYLAWQGIP, GIGTLSLGWLFWPLALFVLVG, GMDGLAAGVVAILLIGLGLLH, PELSVLAFTLSGACLGFLVHN, LFMGDTGSLGLGGALAGLALLGD, and VVGSFYGVTALLVGLGWAWWH.

This sequence belongs to the glycosyltransferase 4 family. MraY subfamily. Mg(2+) serves as cofactor.

The protein resides in the cell inner membrane. The enzyme catalyses UDP-N-acetyl-alpha-D-muramoyl-L-alanyl-gamma-D-glutamyl-meso-2,6-diaminopimeloyl-D-alanyl-D-alanine + di-trans,octa-cis-undecaprenyl phosphate = di-trans,octa-cis-undecaprenyl diphospho-N-acetyl-alpha-D-muramoyl-L-alanyl-D-glutamyl-meso-2,6-diaminopimeloyl-D-alanyl-D-alanine + UMP. It functions in the pathway cell wall biogenesis; peptidoglycan biosynthesis. Functionally, catalyzes the initial step of the lipid cycle reactions in the biosynthesis of the cell wall peptidoglycan: transfers peptidoglycan precursor phospho-MurNAc-pentapeptide from UDP-MurNAc-pentapeptide onto the lipid carrier undecaprenyl phosphate, yielding undecaprenyl-pyrophosphoryl-MurNAc-pentapeptide, known as lipid I. The sequence is that of Phospho-N-acetylmuramoyl-pentapeptide-transferase from Synechococcus sp. (strain JA-2-3B'a(2-13)) (Cyanobacteria bacterium Yellowstone B-Prime).